The sequence spans 398 residues: S-adenosylmethionine synthase (398 aa).

Histidine 16 provides a ligand contact to ATP. Aspartate 18 serves as a coordination point for Mg(2+). Residue glutamate 44 participates in K(+) binding. L-methionine-binding residues include glutamate 57 and glutamine 100. Residues 100–110 are flexible loop; that stretch reads QSPDIAQGVNE. Residues 175–177, 242–243, aspartate 251, 257–258, alanine 274, and lysine 278 contribute to the ATP site; these read DAK, RF, and RK. Aspartate 251 provides a ligand contact to L-methionine. Lysine 282 contributes to the L-methionine binding site.

Belongs to the AdoMet synthase family. Homotetramer; dimer of dimers. Mg(2+) serves as cofactor. K(+) is required as a cofactor.

Its subcellular location is the cytoplasm. It catalyses the reaction L-methionine + ATP + H2O = S-adenosyl-L-methionine + phosphate + diphosphate. Its pathway is amino-acid biosynthesis; S-adenosyl-L-methionine biosynthesis; S-adenosyl-L-methionine from L-methionine: step 1/1. In terms of biological role, catalyzes the formation of S-adenosylmethionine (AdoMet) from methionine and ATP. The overall synthetic reaction is composed of two sequential steps, AdoMet formation and the subsequent tripolyphosphate hydrolysis which occurs prior to release of AdoMet from the enzyme. The polypeptide is S-adenosylmethionine synthase (Streptococcus agalactiae serotype III (strain NEM316)).